Reading from the N-terminus, the 246-residue chain is Acetoacetate decarboxylase (246 aa).

The active-site Schiff-base intermediate with acetoacetate is the Lys-116.

It belongs to the ADC family.

The enzyme catalyses acetoacetate + H(+) = acetone + CO2. Catalyzes the conversion of acetoacetate to acetone and carbon dioxide. In Burkholderia cenocepacia (strain ATCC BAA-245 / DSM 16553 / LMG 16656 / NCTC 13227 / J2315 / CF5610) (Burkholderia cepacia (strain J2315)), this protein is Acetoacetate decarboxylase.